Reading from the N-terminus, the 189-residue chain is MKHQYFAKKSFLFISMLAAFKTSAFELPSVPFPAPGSDEILFVVRDTTFNTQAPVNVKVSDFWTNRNVKRKPYEDVYGQSVFTTSGTKWLTSYMTVNINDKDYTMAAVSGYKSGHSAVFVKSGQVQLQHSYNSVANFVGEDEGSIPSKMYLDETPEYFVNVEAYESGSGNILVMCISNKESFFECKHQQ.

A signal peptide spans 1-24 (MKHQYFAKKSFLFISMLAAFKTSA). The cysteines at positions 175 and 185 are disulfide-linked.

Belongs to the TDH hemolysin family. As to quaternary structure, homodimer.

Functionally, bacterial hemolysins are exotoxins that attack blood cell membranes and cause cell rupture by mechanisms not clearly defined. The chain is Thermostable direct hemolysin 1 (tdh1) from Vibrio parahaemolyticus serotype O3:K6 (strain RIMD 2210633).